A 121-amino-acid chain; its full sequence is Large ribosomal subunit protein bL12 (121 aa).

Belongs to the bacterial ribosomal protein bL12 family. As to quaternary structure, homodimer. Part of the ribosomal stalk of the 50S ribosomal subunit. Forms a multimeric L10(L12)X complex, where L10 forms an elongated spine to which 2 to 4 L12 dimers bind in a sequential fashion. Binds GTP-bound translation factors.

Its function is as follows. Forms part of the ribosomal stalk which helps the ribosome interact with GTP-bound translation factors. Is thus essential for accurate translation. The sequence is that of Large ribosomal subunit protein bL12 from Malacoplasma penetrans (strain HF-2) (Mycoplasma penetrans).